We begin with the raw amino-acid sequence, 405 residues long: Acetylornithine/succinyldiaminopimelate aminotransferase (405 aa).

Pyridoxal 5'-phosphate contacts are provided by residues 108 to 109 and Phe-141; that span reads GT. N(2)-acetyl-L-ornithine is bound at residue Arg-144. 226–229 contributes to the pyridoxal 5'-phosphate binding site; that stretch reads DEVQ. Lys-255 bears the N6-(pyridoxal phosphate)lysine mark. Ser-283 contributes to the N(2)-acetyl-L-ornithine binding site. Thr-284 provides a ligand contact to pyridoxal 5'-phosphate.

This sequence belongs to the class-III pyridoxal-phosphate-dependent aminotransferase family. ArgD subfamily. As to quaternary structure, homodimer. Pyridoxal 5'-phosphate serves as cofactor.

The protein resides in the cytoplasm. It catalyses the reaction N(2)-acetyl-L-ornithine + 2-oxoglutarate = N-acetyl-L-glutamate 5-semialdehyde + L-glutamate. The catalysed reaction is N-succinyl-(2S,6S)-2,6-diaminopimelate + 2-oxoglutarate = (S)-2-succinylamino-6-oxoheptanedioate + L-glutamate. Its pathway is amino-acid biosynthesis; L-arginine biosynthesis; N(2)-acetyl-L-ornithine from L-glutamate: step 4/4. The protein operates within amino-acid biosynthesis; L-lysine biosynthesis via DAP pathway; LL-2,6-diaminopimelate from (S)-tetrahydrodipicolinate (succinylase route): step 2/3. With respect to regulation, inhibited by gabaculine (Gcn). Its function is as follows. Involved in both the arginine and lysine biosynthetic pathways. This Salmonella typhimurium (strain LT2 / SGSC1412 / ATCC 700720) protein is Acetylornithine/succinyldiaminopimelate aminotransferase.